The primary structure comprises 416 residues: CBL-interacting serine/threonine-protein kinase 21 (416 aa).

In terms of domain architecture, Protein kinase spans 12–264 (YEIGRTIGEG…AEIIIKDSWF (253 aa)). ATP is bound by residues 18-26 (IGEGNFAKV) and Lys-41. The Proton acceptor role is filled by Asp-134. Residues 152-178 (DFGLSAVPKSGDMLSTACGSPCYIAPE) are activation loop. Phosphoserine is present on Ser-156. Thr-167 is subject to Phosphothreonine. The region spanning 291–315 (ASSNFINAFQIIAMSSDLDLSGLFE) is the NAF domain. The PPI stretch occupies residues 321 to 351 (RYKTRIGSKNTAQETIKKIEAAATYVSLSVE).

The protein belongs to the protein kinase superfamily. CAMK Ser/Thr protein kinase family. SNF1 subfamily. Interacts with CBL9. Mn(2+) is required as a cofactor.

It catalyses the reaction L-seryl-[protein] + ATP = O-phospho-L-seryl-[protein] + ADP + H(+). The enzyme catalyses L-threonyl-[protein] + ATP = O-phospho-L-threonyl-[protein] + ADP + H(+). CIPK serine-threonine protein kinases interact with CBL proteins. Binding of a CBL protein to the regulatory NAF domain of CIPK protein lead to the activation of the kinase in a calcium-dependent manner. This is CBL-interacting serine/threonine-protein kinase 21 (CIPK21) from Arabidopsis thaliana (Mouse-ear cress).